Reading from the N-terminus, the 1087-residue chain is Exoglucanase XynX (1087 aa).

The first 30 residues, 1–30, serve as a signal peptide directing secretion; the sequence is MKNNLSKFVSIFTAFIMIFGTSLFFPHVSA. Residues 37–188 form the CBM-cenC domain; sequence ANLVSNGDFE…YIDDVVVTPQ (152 aa). One can recognise a GH10 domain in the interval 204–527; the sequence is QNDIPDLSSV…KPAYWAIADP (324 aa). E347 acts as the Proton donor in catalysis. D389 is a catalytic residue. The Nucleophile role is filled by E452. SLH domains lie at 903–966, 967–1025, and 1028–1087; these read KKSV…YNGE, FSDV…KEEN, and ATSF…SNNL.

It belongs to the glycosyl hydrolase 10 (cellulase F) family.

The enzyme catalyses Hydrolysis of (1-&gt;4)-beta-D-glucosidic linkages in cellulose and cellotetraose, releasing cellobiose from the non-reducing ends of the chains.. The sequence is that of Exoglucanase XynX (xynX) from Acetivibrio thermocellus (Hungateiclostridium thermocellum).